Reading from the N-terminus, the 473-residue chain is Probable transporter MCH2 (473 aa).

The Cytoplasmic segment spans residues 1-37 (MSEERHEDHHRDVENKLNLNGKDDINGNTSISIEVPD). Residues 38-58 (GGYGWFILLAFILYNFSTWGA) traverse the membrane as a helical segment. The Extracellular segment spans residues 59–83 (NSGYAIYLAHYLENNTFAGGSKLDY). N-linked (GlcNAc...) asparagine glycosylation occurs at N72. The chain crosses the membrane as a helical span at residues 84–105 (ASIGGLAFSCGLFFAPVITWLY). At 106–111 (HIFSIQ) the chain is on the cytoplasmic side. The helical transmembrane segment at 112–135 (FIIGLGILFQGAALLLAAFSVTLW) threads the bilayer. Residues 136 to 141 (EIYLTQ) are Extracellular-facing. Residues 142–163 (GVLIGFGLAFIFIPSVTLIPLW) form a helical membrane-spanning segment. The Cytoplasmic segment spans residues 164-169 (FRNKRS). The chain crosses the membrane as a helical span at residues 170–186 (LASGIGTAGSGLGGIVF). Over 187-200 (NLGMQSILQKRGVK) the chain is Extracellular. A helical membrane pass occupies residues 201-220 (WALIAQCIICTSLSTIALML). Residues 221 to 243 (TRTTHQGLRQHKRSYKFELLDYD) are Cytoplasmic-facing. Residues 244-268 (VLSNFAVWLLFGFVSFAMLGYVVLL) traverse the membrane as a helical segment. Over 269 to 286 (YSLSDFTVSLGYTSKQGS) the chain is Extracellular. A helical membrane pass occupies residues 287–304 (YVSCMVSVGSLLGRPIVG). Residues 305–312 (HIADKYGS) are Cytoplasmic-facing. A helical transmembrane segment spans residues 313-332 (LTVGMILHLVMAILCWAMWI). Over 333–342 (PCKNLATAIA) the chain is Extracellular. Residues 343 to 362 (FGLLVGSIMGTIWPTIASIV) traverse the membrane as a helical segment. Residues 363-370 (TRIVGLQK) are Cytoplasmic-facing. Residues 371 to 394 (LPGTFGSTWIFMAAFALVAPIIGL) traverse the membrane as a helical segment. Topologically, residues 395–408 (ELRSTDTNGNDYYR) are extracellular. A helical transmembrane segment spans residues 409 to 433 (TAIFVGFAYFGVSLCQWLLRGFIIA). Residues 434 to 473 (RDEIAVREAYSADQNELHLNVKLSHMSKCLFRYKQLPRRV) are Cytoplasmic-facing.

The protein belongs to the major facilitator superfamily. Monocarboxylate porter (TC 2.A.1.13) family.

It localises to the membrane. Functionally, probable transporter. Does not act in the transport of monocarboxylic acids across the plasma membrane. The polypeptide is Probable transporter MCH2 (MCH2) (Saccharomyces cerevisiae (strain ATCC 204508 / S288c) (Baker's yeast)).